The primary structure comprises 338 residues: Mas-related G-protein coupled receptor member B2 (338 aa).

Residues 1–40 (MSGDFLIKNLSTSAWKTNITVLNGSYYIDTSVCVTRNQAM) are Extracellular-facing. Residues Asn9, Asn18, and Asn23 are each glycosylated (N-linked (GlcNAc...) asparagine). Residues 41–61 (ILLSIIISLVGMGLNAIVLWF) form a helical membrane-spanning segment. The Cytoplasmic portion of the chain corresponds to 62 to 89 (LGIRMHTNAFTVYILNLAMADFLYLCSQ). A helical membrane pass occupies residues 90–110 (FVICLLIAFYIFYSIDINIPL). Val111 is a topological domain (extracellular). Residues 112-132 (LYVVPIFAYLSGLSILSTISI) traverse the membrane as a helical segment. The Cytoplasmic portion of the chain corresponds to 133–157 (ERCLSVIWPIWYRCKRPRHTSAITC). The helical transmembrane segment at 158–178 (FVLWVMSLLLGLLEGKACGLL) threads the bilayer. At 179 to 191 (FNSFDSYWCETFD) the chain is on the extracellular side. A helical membrane pass occupies residues 192 to 212 (VITNIWSVVFFGVLCGSSLTL). Residues 213–231 (LVRIFCGSQRIPMTRLYVT) are Cytoplasmic-facing. The chain crosses the membrane as a helical span at residues 232-252 (ITLTVLVFLIFGLPFGIYWIL). At 253-268 (YQWISNFYYVEICNFY) the chain is on the extracellular side. A helical transmembrane segment spans residues 269–289 (LEILFLSCVNSCMNPIIYFLV). Over 290 to 338 (GSIRHRRFRRKTLKLLLQRAMQDTPEEEQSGNKSSSEHPEELETVQSCS) the chain is Cytoplasmic. Positions 310-338 (MQDTPEEEQSGNKSSSEHPEELETVQSCS) are disordered.

It belongs to the G-protein coupled receptor 1 family. Mas subfamily. Mast cell-specific.

Its subcellular location is the cell membrane. Functionally, mast cell-specific receptor for basic secretagogues, i.e. cationic amphiphilic drugs, as well as endo- or exogenous peptides, consisting of a basic head group and a hydrophobic core. Recognizes and binds small molecules containing a cyclized tetrahydroisoquinoline (THIQ), such as non-steroidal neuromuscular blocking drugs (NMBDs), including tubocurarine and atracurium. In response to these compounds, mediates pseudo-allergic reactions characterized by histamine release, inflammation and airway contraction. This chain is Mas-related G-protein coupled receptor member B2 (Mrgprb2), found in Mus musculus (Mouse).